Reading from the N-terminus, the 400-residue chain is MAGCVPLLQGLVLVLALHRVEPSVFLPASKANDVLVRWKRAGSYLLEELFEGNLEKECYEEICVYEEAREVFENEVVTDEFWRRYKGGSPCISQPCLHNGSCQDSIWGYTCTCSPGYEGSNCELAKNECHPERTDGCQHFCLPGQESYTCSCAQGYRLGEDHKQCVPHDQCACGVLTSEKRAPDLQDLPWQVKLTNSEGKDFCGGVIIRENFVLTTAKCSLLHRNITVKTYFNRTSQDPLMIKITHVHVHMRYDADAGENDLSLLELEWPIQCPGAGLPVCTPEKDFAEHLLIPRTRGLLSGWARNGTDLGNSLTTRPVTLVEGEECGQVLNVTVTTRTYCERSSVAAMHWMDGSVVTREHRGSWFLTGVLGSQPVGGQAHMVLVTKVSRYSLWFKQIMN.

Residues 1-23 (MAGCVPLLQGLVLVLALHRVEPS) form the signal peptide. Positions 24–40 (VFLPASKANDVLVRWKR) are excised as a propeptide. The region spanning 41–86 (AGSYLLEELFEGNLEKECYEEICVYEEAREVFENEVVTDEFWRRYK) is the Gla domain. Residues Glu47, Glu48, Glu51, Glu55, Glu57, Glu60, Glu61, Glu66, Glu67, Glu70, Glu73, Glu75, and Glu80 each carry the 4-carboxyglutamate modification. Cys58 and Cys63 are disulfide-bonded. EGF-like domains follow at residues 87 to 123 (GGSP…SNCE) and 125 to 166 (AKNE…KQCV). 7 disulfides stabilise this stretch: Cys91–Cys102, Cys96–Cys111, Cys113–Cys122, Cys129–Cys141, Cys137–Cys150, Cys152–Cys165, and Cys203–Cys219. Ser93 is a glycosylation site (O-linked (Glc...) serine). Asn99 carries N-linked (GlcNAc...) asparagine glycosylation. Residue Asp104 is modified to (3R)-3-hydroxyaspartate. The 226-residue stretch at 175 to 400 (VLTSEKRAPD…YSLWFKQIMN (226 aa)) folds into the Peptidase S1 domain. Asn225, Asn233, Asn306, and Asn332 each carry an N-linked (GlcNAc...) asparagine glycan. A disulfide bridge links Cys327 with Cys341.

This sequence belongs to the peptidase S1 family. As to quaternary structure, interacts with SERPINA10. Post-translationally, the iron and 2-oxoglutarate dependent 3-hydroxylation of aspartate and asparagine is (R) stereospecific within EGF domains. In terms of tissue distribution, plasma.

Its subcellular location is the secreted. In terms of biological role, appears to assist hemostasis by binding thrombin and promoting its association with phospholipid vesicles. Inhibits activity of the coagulation protease factor Xa in the presence of SERPINA10, calcium and phospholipids. The chain is Vitamin K-dependent protein Z (PROZ) from Homo sapiens (Human).